The following is a 253-amino-acid chain: Ice-binding protein (253 aa).

An N-terminal signal peptide occupies residues 1–27; it reads MKTLISNSKKVLIPLIMGSIFAGNVMA. Cysteine 75 and cysteine 93 are disulfide-bonded. Short sequence motifs (ice-binding site motif (T-A/G-X-T/N)) lie at residues 220–223 and 232–235; these read TGTT and TAVT.

It belongs to the ice-binding protein family.

The protein resides in the secreted. Functionally, binds to the surface of ice crystals and inhibits their growth. Has ice recrystallization inhibition (RI) activity (the ability to prevent the formation of larger grains of ice at the expense of smaller grains), which may protect membranes from freezing injury. Has high thermal hysteresis (TH) activity, which is the ability to lower the freezing point of an aqueous solution below its melting point, and thus the freezing of the cell fluid can be prevented protecting the organism from ice damage. The TH activity of this protein is 3.8 degrees Celsius at 14 mM. The sequence is that of Ice-binding protein from Colwellia sp.